A 90-amino-acid chain; its full sequence is Envelope protein US9 (90 aa).

Residues 1-67 (MTSRLSDPNS…RRRRTRCVGM (67 aa)) are Intravirion-facing. Positions 21–24 (YPTA) match the Internalization motif motif. The tract at residues 30–39 (EAYYSESEDE) is acidic. A phosphoserine; by host CK2 mark is found at S34 and S36. The helical; Signal-anchor for type II membrane protein transmembrane segment at 68–88 (VIACLLVAVLSGGFGALLMWL) threads the bilayer. The Virion surface segment spans residues 89 to 90 (LR).

This sequence belongs to the alphaherpesvirinae envelope protein US9 family. Post-translationally, phosphorylated on serines within the acidic cluster, possibly by host CK2. Phosphorylation determines whether endocytosed viral US9 traffics to the trans-Golgi network or recycles to the cell membrane.

The protein localises to the virion membrane. The protein resides in the host Golgi apparatus membrane. It localises to the host smooth endoplasmic reticulum membrane. It is found in the host cell membrane. In terms of biological role, essential for the anterograde spread of the infection throughout the host nervous system. Together with the gE/gI heterodimer, US9 is involved in the sorting and transport of viral structural components toward axon tips. This chain is Envelope protein US9, found in Homo sapiens (Human).